The chain runs to 151 residues: Ribosome maturation factor RimP (151 aa).

The protein belongs to the RimP family.

It localises to the cytoplasm. In terms of biological role, required for maturation of 30S ribosomal subunits. This Vibrio atlanticus (strain LGP32) (Vibrio splendidus (strain Mel32)) protein is Ribosome maturation factor RimP.